A 409-amino-acid polypeptide reads, in one-letter code: Broad specificity amino-acid racemase (409 aa).

Positions M1–A25 are cleaved as a signal peptide. A disulfide bond links C72 and C98. K76 (proton acceptor) is an active-site residue. K76 carries the post-translational modification N6-(pyridoxal phosphate)lysine. R175 contributes to the substrate binding site. Residue Y301 is the Proton acceptor of the active site. M349 contributes to the substrate binding site.

It belongs to the alanine racemase family. Bsr subfamily. The cofactor is pyridoxal 5'-phosphate.

It localises to the periplasm. The enzyme catalyses an L-alpha-amino acid = a D-alpha-amino acid. It carries out the reaction L-lysine = D-lysine. The catalysed reaction is L-arginine = D-arginine. In terms of biological role, amino-acid racemase able to utilize a broad range of substrates. The sequence is that of Broad specificity amino-acid racemase from Vibrio parahaemolyticus serotype O3:K6 (strain RIMD 2210633).